Consider the following 365-residue polypeptide: MASQLNEAIFAARRRNDDDDTTRSSVFTYTNSNNTRGPFEGPNYHIAPRWVYNLTSIWMIFVVFASVFTNGLVIVATLKFKKLRHPLNWILVNMAIADLGETVIASTISVFNQIFGYFILGHPMCVLEGFTVSTCGITALWSLTVIAWERWFVVCKPFGNIKFDEKLAATGIIFSWVWSAGWCAPPMFGWSRFWPHGLKTSCGPDVFSGSSDPGVQSYMLVLMITCCIIPLAIIILCYLHVWWTIRQVAQQQKESESTQKAEREVSRMVVVMIVAYIFCWGPYTFFACFAAFSPGYSFHPLAAALPAYFAKSATIYNPIIYVFMNRQFRNCIYQMFGKKVDDGSEVSSTSRTEVSSVSNSSVSPA.

The Extracellular portion of the chain corresponds to 1–51 (MASQLNEAIFAARRRNDDDDTTRSSVFTYTNSNNTRGPFEGPNYHIAPRWV). N-linked (GlcNAc...) asparagine glycosylation is present at N33. The chain crosses the membrane as a helical span at residues 52–76 (YNLTSIWMIFVVFASVFTNGLVIVA). The Cytoplasmic segment spans residues 77-88 (TLKFKKLRHPLN). Residues 89–113 (WILVNMAIADLGETVIASTISVFNQ) traverse the membrane as a helical segment. Residues 114-128 (IFGYFILGHPMCVLE) are Extracellular-facing. The cysteines at positions 125 and 202 are disulfide-linked. A helical transmembrane segment spans residues 129 to 148 (GFTVSTCGITALWSLTVIAW). The Cytoplasmic portion of the chain corresponds to 149 to 167 (ERWFVVCKPFGNIKFDEKL). A helical membrane pass occupies residues 168–191 (AATGIIFSWVWSAGWCAPPMFGWS). Residues 192-217 (RFWPHGLKTSCGPDVFSGSSDPGVQS) lie on the Extracellular side of the membrane. A helical membrane pass occupies residues 218–245 (YMLVLMITCCIIPLAIIILCYLHVWWTI). The Cytoplasmic segment spans residues 246-267 (RQVAQQQKESESTQKAEREVSR). A helical transmembrane segment spans residues 268–291 (MVVVMIVAYIFCWGPYTFFACFAA). Residues 292 to 299 (FSPGYSFH) lie on the Extracellular side of the membrane. Residues 300-324 (PLAAALPAYFAKSATIYNPIIYVFM) traverse the membrane as a helical segment. K311 carries the post-translational modification N6-(retinylidene)lysine. Over 325-365 (NRQFRNCIYQMFGKKVDDGSEVSSTSRTEVSSVSNSSVSPA) the chain is Cytoplasmic. Residues 342–365 (DGSEVSSTSRTEVSSVSNSSVSPA) are disordered. Positions 345-365 (EVSSTSRTEVSSVSNSSVSPA) are enriched in low complexity.

It belongs to the G-protein coupled receptor 1 family. Opsin subfamily. Phosphorylated on some or all of the serine and threonine residues present in the C-terminal region.

Its subcellular location is the membrane. In terms of biological role, visual pigments are the light-absorbing molecules that mediate vision. They consist of an apoprotein, opsin, covalently linked to cis-retinal. The polypeptide is Red-sensitive opsin (opn1lw1) (Xenopus laevis (African clawed frog)).